The primary structure comprises 255 residues: Hydroxyacylglutathione hydrolase (255 aa).

His-56, His-58, Asp-60, His-61, His-114, Asp-133, and His-171 together coordinate Zn(2+).

The protein belongs to the metallo-beta-lactamase superfamily. Glyoxalase II family. In terms of assembly, monomer. Zn(2+) serves as cofactor.

It carries out the reaction an S-(2-hydroxyacyl)glutathione + H2O = a 2-hydroxy carboxylate + glutathione + H(+). Its pathway is secondary metabolite metabolism; methylglyoxal degradation; (R)-lactate from methylglyoxal: step 2/2. Its function is as follows. Thiolesterase that catalyzes the hydrolysis of S-D-lactoyl-glutathione to form glutathione and D-lactic acid. The protein is Hydroxyacylglutathione hydrolase of Cereibacter sphaeroides (strain ATCC 17023 / DSM 158 / JCM 6121 / CCUG 31486 / LMG 2827 / NBRC 12203 / NCIMB 8253 / ATH 2.4.1.) (Rhodobacter sphaeroides).